The chain runs to 191 residues: MKLIVGLGNPGREYAATRHNAGAWWVVRLADQLGVTLKADGKFHGLCARIGQGESESWLLNPQTYMNASGRAVAALCRFYRIQPEQMLVVHDELDLPPGVSRLKLDGGLGGHNGLKDIVAHLGTREFWRLRIGIGHPGEKHAVVNYVLQPPRKEEAALIDTAINDSLEVWPLIAEGNYQAAMMRLHTQKQS.

Tyrosine 14 lines the tRNA pocket. Histidine 19 acts as the Proton acceptor in catalysis. Positions 65, 67, and 113 each coordinate tRNA.

It belongs to the PTH family. As to quaternary structure, monomer.

The protein localises to the cytoplasm. It catalyses the reaction an N-acyl-L-alpha-aminoacyl-tRNA + H2O = an N-acyl-L-amino acid + a tRNA + H(+). In terms of biological role, hydrolyzes ribosome-free peptidyl-tRNAs (with 1 or more amino acids incorporated), which drop off the ribosome during protein synthesis, or as a result of ribosome stalling. Catalyzes the release of premature peptidyl moieties from peptidyl-tRNA molecules trapped in stalled 50S ribosomal subunits, and thus maintains levels of free tRNAs and 50S ribosomes. The sequence is that of Peptidyl-tRNA hydrolase from Nitrosospira multiformis (strain ATCC 25196 / NCIMB 11849 / C 71).